An 833-amino-acid chain; its full sequence is Endoribonuclease YSH1 (833 aa).

Zn(2+) is bound by residues histidine 84, histidine 86, aspartate 88, histidine 89, histidine 174, and aspartate 195. The active-site Proton donor is histidine 443. Histidine 465 contributes to the Zn(2+) binding site. Disordered stretches follow at residues 600–624 (RRAKNGQNGHADKMITDGDDESKQE), 685–707 (KRSSAKHSHSHDLPEVNPHHSAT), and 728–767 (VAPVTTPKLPPLEDVDDKNKNEGEDEDAMKTDEDGEDAQL). 2 stretches are compositionally biased toward basic and acidic residues: residues 694 to 707 (SHDLPEVNPHHSAT) and 744 to 759 (DKNKNEGEDEDAMKTD).

Belongs to the metallo-beta-lactamase superfamily. RNA-metabolizing metallo-beta-lactamase-like family. CPSF2/YSH1 subfamily.

The protein resides in the nucleus. In terms of biological role, component of the cleavage factor I (CF I) involved in pre-mRNA 3'-end processing. The protein is Endoribonuclease YSH1 (YSH1) of Gibberella zeae (strain ATCC MYA-4620 / CBS 123657 / FGSC 9075 / NRRL 31084 / PH-1) (Wheat head blight fungus).